We begin with the raw amino-acid sequence, 423 residues long: Putative competence-damage inducible protein (423 aa).

The protein belongs to the CinA family.

The protein is Putative competence-damage inducible protein of Streptococcus pyogenes serotype M12 (strain MGAS2096).